The primary structure comprises 270 residues: tRNA pseudouridine synthase A (270 aa).

Residue D60 is the Nucleophile of the active site. The interval F107–F111 is RNA binding. Substrate is bound at residue Y118. The interval Q168 to R172 is interaction with tRNA.

The protein belongs to the tRNA pseudouridine synthase TruA family. Homodimer.

The catalysed reaction is uridine(38/39/40) in tRNA = pseudouridine(38/39/40) in tRNA. In terms of biological role, formation of pseudouridine at positions 38, 39 and 40 in the anticodon stem and loop of transfer RNAs. This is tRNA pseudouridine synthase A from Citrobacter koseri (strain ATCC BAA-895 / CDC 4225-83 / SGSC4696).